The following is a 558-amino-acid chain: MTTTTTKFRDVEIRAPRGTELMAKSWLTEAPLRMLMNNLDPDVAENPKELVVYGGIGRAARNWECFDKIVDTLKNLETDETLLVQSGKPVGVFKTHKDAPRVLIANSNLVPHWANWEHFNELDAKALAMYGQMTAGSWIYIGSQGIVQGTYETFVEAGRQHYNGDLKGRWVLTAGLGGMGGAQPLAATLAGACSLNIECQQASIDFRLRTRYVDEQATDLDDALARIDRYTKEGKAISIALHGNAAEILPELVRRGVRPDMVTDQTSAHDPLNGYLPVGWTWDEYRERAKKEPEAVVKAAKQSMAKHVQAMLDFQKMGVPTFDYGNNIRQMAKEEGVANAFDFPGFVPAYIRPLFCRGIGPFRWAALSGDPEDIYKTDAKVKELIPDDEHLHHWLDMARERISFQGLPARICWVGLGLRAKLGLAFNEMVRSGELSAPIVIGRDHLDSGSVASPNRETEAMQDGSDAVSDWPLLNALLNTAGGATWVSLHHGGGVGMGFSQHSGVVIVCDGTDEAAARIARVLTNDPATGVMRHADAGYEIAINCAKEQGLHLPMITQ.

Residues 54 to 55 (GG), Q132, 178 to 180 (GMG), E198, 244 to 245 (NA), 265 to 269 (QTSAH), 275 to 276 (YL), and Y324 contribute to the NAD(+) site. The active site involves C412. G494 lines the NAD(+) pocket.

Belongs to the urocanase family. Requires NAD(+) as cofactor.

The protein resides in the cytoplasm. It catalyses the reaction 4-imidazolone-5-propanoate = trans-urocanate + H2O. It participates in amino-acid degradation; L-histidine degradation into L-glutamate; N-formimidoyl-L-glutamate from L-histidine: step 2/3. Catalyzes the conversion of urocanate to 4-imidazolone-5-propionate. In Acinetobacter baumannii (strain SDF), this protein is Urocanate hydratase.